The sequence spans 234 residues: Glucosamine-6-phosphate deaminase (234 aa).

D63 acts as the Proton acceptor; for enolization step in catalysis. N129 serves as the catalytic For ring-opening step. The active-site Proton acceptor; for ring-opening step is H131. E136 acts as the For ring-opening step in catalysis.

This sequence belongs to the glucosamine/galactosamine-6-phosphate isomerase family. NagB subfamily.

It carries out the reaction alpha-D-glucosamine 6-phosphate + H2O = beta-D-fructose 6-phosphate + NH4(+). The protein operates within amino-sugar metabolism; N-acetylneuraminate degradation; D-fructose 6-phosphate from N-acetylneuraminate: step 5/5. Functionally, catalyzes the reversible isomerization-deamination of glucosamine 6-phosphate (GlcN6P) to form fructose 6-phosphate (Fru6P) and ammonium ion. The sequence is that of Glucosamine-6-phosphate deaminase from Listeria monocytogenes serotype 4a (strain HCC23).